A 199-amino-acid chain; its full sequence is Transgelin-3 (199 aa).

Positions 24-136 constitute a Calponin-homology (CH) domain; it reads ADLENKLVDW…RTLMALGSVA (113 aa). Position 163 is a phosphoserine (Ser-163). A Calponin-like repeat occupies 174–199; the sequence is IGLQMGSNKGASQAGMTGYGMPRQIM. The segment covering 178–188 has biased composition (polar residues); it reads MGSNKGASQAG. Residues 178–199 are disordered; it reads MGSNKGASQAGMTGYGMPRQIM.

Belongs to the calponin family.

This Mus musculus (Mouse) protein is Transgelin-3 (Tagln3).